A 329-amino-acid polypeptide reads, in one-letter code: Aurora kinase B (329 aa).

Positions 1-14 are enriched in basic residues; that stretch reads MTLSRAKHANRNHL. Residues 1–21 are disordered; sequence MTLSRAKHANRNHLPHLLAKV. Residues 53-305 form the Protein kinase domain; that stretch reads FEMGAHLGRG…LVDVMTHYWV (253 aa). Residues 59-67 and Lys-82 contribute to the ATP site; that span reads LGRGKFGRV. Asp-178 functions as the Proton acceptor in the catalytic mechanism.

This sequence belongs to the protein kinase superfamily. Ser/Thr protein kinase family. Aurora subfamily. Interacts with Incenp and Cdc37. Mg(2+) is required as a cofactor.

The protein resides in the chromosome. It is found in the cytoplasm. It localises to the cytoskeleton. Its subcellular location is the midbody. It catalyses the reaction L-seryl-[protein] + ATP = O-phospho-L-seryl-[protein] + ADP + H(+). It carries out the reaction L-threonyl-[protein] + ATP = O-phospho-L-threonyl-[protein] + ADP + H(+). In terms of biological role, serine/threonine-protein kinase that mediates both meiotic and mitotic chromosome segregation. Required for histone H3 'Ser-10' phosphorylation. Phosphorylates mei-S332 within residues 124-126 and stabilizes its association with centromeres during meiosis. May regulate the function of the ESCRT-III complex core component shrb during abscission of germline cells in oogenesis. The protein is Aurora kinase B of Drosophila melanogaster (Fruit fly).